A 101-amino-acid polypeptide reads, in one-letter code: UPF0473 protein spr0177 (101 aa).

It belongs to the UPF0473 family.

This is UPF0473 protein spr0177 from Streptococcus pneumoniae (strain ATCC BAA-255 / R6).